A 463-amino-acid polypeptide reads, in one-letter code: Putative protein FAM90A2P (463 aa).

Disordered stretches follow at residues 1–42 (MTAR…DPRL), 67–115 (ALVP…PQRK), 150–295 (MPVH…PAQA), and 326–365 (ALEN…PPHS). 3 stretches are compositionally biased toward basic and acidic residues: residues 74–83 (GKKEGKENLK), 97–114 (NKDK…DPQR), and 159–170 (PCVDPELADRSA). Residues 180-198 (LASLSPLRKASLRSSSSLG) show a composition bias toward low complexity.

This sequence belongs to the FAM90 family.

The protein is Putative protein FAM90A2P (FAM90A2P) of Homo sapiens (Human).